The following is a 508-amino-acid chain: Bifunctional purine biosynthesis protein PurH (508 aa).

Positions Met1 to Val144 constitute an MGS-like domain.

Belongs to the PurH family.

The catalysed reaction is (6R)-10-formyltetrahydrofolate + 5-amino-1-(5-phospho-beta-D-ribosyl)imidazole-4-carboxamide = 5-formamido-1-(5-phospho-D-ribosyl)imidazole-4-carboxamide + (6S)-5,6,7,8-tetrahydrofolate. It carries out the reaction IMP + H2O = 5-formamido-1-(5-phospho-D-ribosyl)imidazole-4-carboxamide. Its pathway is purine metabolism; IMP biosynthesis via de novo pathway; 5-formamido-1-(5-phospho-D-ribosyl)imidazole-4-carboxamide from 5-amino-1-(5-phospho-D-ribosyl)imidazole-4-carboxamide (10-formyl THF route): step 1/1. It participates in purine metabolism; IMP biosynthesis via de novo pathway; IMP from 5-formamido-1-(5-phospho-D-ribosyl)imidazole-4-carboxamide: step 1/1. This Leuconostoc mesenteroides subsp. mesenteroides (strain ATCC 8293 / DSM 20343 / BCRC 11652 / CCM 1803 / JCM 6124 / NCDO 523 / NBRC 100496 / NCIMB 8023 / NCTC 12954 / NRRL B-1118 / 37Y) protein is Bifunctional purine biosynthesis protein PurH.